Reading from the N-terminus, the 105-residue chain is Large ribosomal subunit protein uL24 (105 aa).

The protein belongs to the universal ribosomal protein uL24 family. In terms of assembly, part of the 50S ribosomal subunit.

One of two assembly initiator proteins, it binds directly to the 5'-end of the 23S rRNA, where it nucleates assembly of the 50S subunit. In terms of biological role, one of the proteins that surrounds the polypeptide exit tunnel on the outside of the subunit. This Lachnoclostridium phytofermentans (strain ATCC 700394 / DSM 18823 / ISDg) (Clostridium phytofermentans) protein is Large ribosomal subunit protein uL24.